The following is a 428-amino-acid chain: L-rhamnonate dehydratase (428 aa).

H56 and R82 together coordinate substrate. Mg(2+) is bound by residues D249, E275, and E303. H352 acts as the Proton acceptor in catalysis. Substrate is bound at residue E372.

The protein belongs to the mandelate racemase/muconate lactonizing enzyme family. RhamD subfamily. Homooctamer; tetramer of dimers. Mg(2+) serves as cofactor.

It carries out the reaction L-rhamnonate = 2-dehydro-3-deoxy-L-rhamnonate + H2O. Catalyzes the dehydration of L-rhamnonate to 2-keto-3-deoxy-L-rhamnonate (KDR). This is L-rhamnonate dehydratase from Shigella sonnei (strain Ss046).